Reading from the N-terminus, the 423-residue chain is MTEIIDVKAREILDSRGNPTVEVDVVLACGVQGRAAVPSGASTGTREALEMRDQDASRFLGKGVLKAVANVNEVIAPEIIGFDTMDQAGLDRTMIDMDGTENKSRLGANAILGVSMAAARAAAKAAEIPLYRHIGGINARILPVPMMNIINGGAHAPNNLDIQEFMILPFGAPSLCEAVRMGAETFHTLKKILKKEGLSTAVGDEGGFAPNLKSNEEAIEFIIRAIEEAGYRPGKDIGIALDAAASEFYKNGKYVFESEGQVLTSEELVDYYESLVTRYALYSIEDGLAEQDWTGWQMMTKRLGDSLQIVGDDVFVTNPDIFRKGISEGIGNSILIKLNQIGTVTETLDTIQMAKESGYTTVISHRSGETEDTFIADLAVAVNAGQIKTGSLSRSDRVAKYNQLIRIEEALGMGGIFPEDLFV.

Gln-163 lines the (2R)-2-phosphoglycerate pocket. Glu-205 serves as the catalytic Proton donor. Residues Asp-242, Glu-285, and Asp-312 each contribute to the Mg(2+) site. The (2R)-2-phosphoglycerate site is built by Lys-337, Arg-366, Ser-367, and Lys-388. Lys-337 acts as the Proton acceptor in catalysis.

The protein belongs to the enolase family. Mg(2+) is required as a cofactor.

Its subcellular location is the cytoplasm. The protein localises to the secreted. The protein resides in the cell surface. It carries out the reaction (2R)-2-phosphoglycerate = phosphoenolpyruvate + H2O. It participates in carbohydrate degradation; glycolysis; pyruvate from D-glyceraldehyde 3-phosphate: step 4/5. Functionally, catalyzes the reversible conversion of 2-phosphoglycerate (2-PG) into phosphoenolpyruvate (PEP). It is essential for the degradation of carbohydrates via glycolysis. The sequence is that of Enolase from Desulforapulum autotrophicum (strain ATCC 43914 / DSM 3382 / VKM B-1955 / HRM2) (Desulfobacterium autotrophicum).